We begin with the raw amino-acid sequence, 545 residues long: Threonine--tRNA ligase catalytic subunit (545 aa).

The tract at residues 139–433 is catalytic; it reads DHRLIGEKLD…LLEHFKGKLP (295 aa). 3 residues coordinate Zn(2+): cysteine 231, histidine 282, and histidine 410.

Belongs to the class-II aminoacyl-tRNA synthetase family. As to quaternary structure, homodimer. Probably interacts with its editing subunit. Zn(2+) serves as cofactor.

The protein localises to the cytoplasm. The enzyme catalyses tRNA(Thr) + L-threonine + ATP = L-threonyl-tRNA(Thr) + AMP + diphosphate + H(+). Functionally, catalyzes the attachment of threonine to tRNA(Thr) in a two-step reaction: L-threonine is first activated by ATP to form Thr-AMP and then transferred to the acceptor end of tRNA(Thr). Also activates L-serine and transfers it to tRNA(Thr) but cannot deacylate incorrectly charged amino acid; unlike most archaea the editing function is found in a freestanding protein. This chain is Threonine--tRNA ligase catalytic subunit, found in Saccharolobus islandicus (strain Y.G.57.14 / Yellowstone #1) (Sulfolobus islandicus).